A 262-amino-acid polypeptide reads, in one-letter code: UDP-2,3-diacylglucosamine hydrolase (262 aa).

Residues aspartate 10, histidine 12, aspartate 47, asparagine 86, histidine 121, histidine 218, and histidine 220 each coordinate Mn(2+).

The protein belongs to the LpxH family. Mn(2+) is required as a cofactor.

It localises to the cell inner membrane. It is found in the cytoplasm. The enzyme catalyses UDP-2-N,3-O-bis[(3R)-3-hydroxytetradecanoyl]-alpha-D-glucosamine + H2O = 2-N,3-O-bis[(3R)-3-hydroxytetradecanoyl]-alpha-D-glucosaminyl 1-phosphate + UMP + 2 H(+). It participates in glycolipid biosynthesis; lipid IV(A) biosynthesis; lipid IV(A) from (3R)-3-hydroxytetradecanoyl-[acyl-carrier-protein] and UDP-N-acetyl-alpha-D-glucosamine: step 4/6. In terms of biological role, hydrolyzes the pyrophosphate bond of UDP-2,3-diacylglucosamine to yield 2,3-diacylglucosamine 1-phosphate (lipid X) and UMP by catalyzing the attack of water at the alpha-P atom. Involved in the biosynthesis of lipid A, a phosphorylated glycolipid that anchors the lipopolysaccharide to the outer membrane of the cell. In Porphyromonas gingivalis (strain ATCC BAA-308 / W83), this protein is UDP-2,3-diacylglucosamine hydrolase.